Consider the following 137-residue polypeptide: Phosphoribosyl-ATP pyrophosphatase (137 aa).

Residues glutamate 114–leucine 124 show a composition bias toward basic and acidic residues. The disordered stretch occupies residues glutamate 114–proline 137.

Belongs to the PRA-PH family.

The protein localises to the cytoplasm. It carries out the reaction 1-(5-phospho-beta-D-ribosyl)-ATP + H2O = 1-(5-phospho-beta-D-ribosyl)-5'-AMP + diphosphate + H(+). It participates in amino-acid biosynthesis; L-histidine biosynthesis; L-histidine from 5-phospho-alpha-D-ribose 1-diphosphate: step 2/9. The sequence is that of Phosphoribosyl-ATP pyrophosphatase from Paracidovorax citrulli (strain AAC00-1) (Acidovorax citrulli).